A 132-amino-acid polypeptide reads, in one-letter code: Small ribosomal subunit protein uS8 (132 aa).

Belongs to the universal ribosomal protein uS8 family. In terms of assembly, part of the 30S ribosomal subunit. Contacts proteins S5 and S12.

Its function is as follows. One of the primary rRNA binding proteins, it binds directly to 16S rRNA central domain where it helps coordinate assembly of the platform of the 30S subunit. The sequence is that of Small ribosomal subunit protein uS8 from Geobacillus sp. (strain WCH70).